The following is a 155-amino-acid chain: MSELTHVRADGSAHMVDVTAKAETSRTAVAEGFVRTRADVVDKLFTADLPKGDALPVARVAGIMGAKKTPEIIPLCHPLPLGKITVDFERLPDGVRIEASVKTRGVTGVEMEALTAVTTAALTVYDMIKAVDKMAVIDGVRVLAKTGGKSGDWSV.

Residues 75 to 77 (LCH) and 111 to 112 (ME) contribute to the substrate site. The active site involves aspartate 126.

This sequence belongs to the MoaC family. As to quaternary structure, homohexamer; trimer of dimers.

It carries out the reaction (8S)-3',8-cyclo-7,8-dihydroguanosine 5'-triphosphate = cyclic pyranopterin phosphate + diphosphate. It participates in cofactor biosynthesis; molybdopterin biosynthesis. Its function is as follows. Catalyzes the conversion of (8S)-3',8-cyclo-7,8-dihydroguanosine 5'-triphosphate to cyclic pyranopterin monophosphate (cPMP). The polypeptide is Cyclic pyranopterin monophosphate synthase (Corynebacterium efficiens (strain DSM 44549 / YS-314 / AJ 12310 / JCM 11189 / NBRC 100395)).